A 222-amino-acid chain; its full sequence is Dual specificity phosphatase 29 (222 aa).

One can recognise a Tyrosine-protein phosphatase domain in the interval 54 to 202 (HVNEVWPKLY…LRELDKQLVQ (149 aa)). 146-153 (HCAMGRSR) serves as a coordination point for substrate. C147 functions as the Phosphocysteine intermediate in the catalytic mechanism. Residues 201–222 (VQQRRGAQHRGEAGEKAGEKEP) are disordered. Over residues 209 to 222 (HRGEAGEKAGEKEP) the composition is skewed to basic and acidic residues.

It belongs to the protein-tyrosine phosphatase family. Non-receptor class dual specificity subfamily. As to quaternary structure, homodimer. Interacts with PRKAA2.

The protein resides in the cytoplasm. It is found in the nucleus. The enzyme catalyses O-phospho-L-tyrosyl-[protein] + H2O = L-tyrosyl-[protein] + phosphate. It carries out the reaction O-phospho-L-seryl-[protein] + H2O = L-seryl-[protein] + phosphate. The catalysed reaction is O-phospho-L-threonyl-[protein] + H2O = L-threonyl-[protein] + phosphate. Dual specificity phosphatase able to dephosphorylate phosphotyrosine, phosphoserine and phosphothreonine residues within the same substrate, with a preference for phosphotyrosine as a substrate. Involved in the modulation of intracellular signaling cascades. In skeletal muscle regulates systemic glucose homeostasis by activating, AMPK, an energy sensor protein kinase. Affects MAP kinase signaling though modulation of the MAPK1/2 cascade in skeletal muscle promoting muscle cell differentiation, development and atrophy. The polypeptide is Dual specificity phosphatase 29 (DUSP29) (Sus scrofa (Pig)).